Here is an 886-residue protein sequence, read N- to C-terminus: MGDFQSRYEILAAIMGPPNTASFKEEEHSGSQTKNYPVVVKCIQEHDPVDTTNVLVADDLDSNFEPFSITDDYGKYENTLVSHSSTILNEPYNESPSSSSSDSSSRSTSPFSQLSSQSLRLNAEEIAPSSLINKAVQSTLRLSEPLVSPIKCPLSEQFINFINQQDSDKVVLIRGFLLPHLASLTTKNVSEPELDKLRHSLYNWWVSILRRLQSNISTSERITYTKAILAIAKHHCWNKVEHSALLYLEHQLILYDTLTFVVHLLSQKSLPYSLTTFCASILVLSFFQLPLFADHFLSALDVKKKYIDALGSSFDEKIMIISHKYLAPFFTDQFSSTMHPYYPKRTSTPFTIGYNRQPIEFTRAWMRRFKSSTGGFFFEFLSCYHSFLALQFSFELPDNVIYFAPGYICLHAYLLELTISVIHISDKKPLMLPTGHEQFPCKTLPEVNPSMEEYNPKMPVTATTLSTLQQFVGHIKDAFKKIGDCRQEQMRLLAVLEQVLINVAKNTPAFNLQSCFLLCSLVEQCFGVFNDFSHRFDFSFWISVAKRLISTSHNMSIVRSITFIYAVWPYLDIKSKELVTLQWLLEENTFQELFLHWSPLVRAYFQRLVCWRFLKLDDMEEFQFKGTVTLRVKNLLKHYFTAQALYHEECLVNGRASPITKPSEPVPMRRLTIVCNHYQNYGNSESTEFELSNYKQDDGTIQALVTDVVSISNSFSSGLKKAFGSLFKNVSGLPAETEIAYHHTLSASNSYVFTDLVDNPDSMLKSTLKYRFVFKFSPSQPLSSLGKNKEKYDALLERSSHGVLPVQSKMLLYNSNHISCPLSSIKGVSVNGKRLVYTSRALVEWALVVNEFDHALSLRKGNETEDMEAPTLTVRIPKSYASNIYN.

The segment at 87-112 is disordered; the sequence is ILNEPYNESPSSSSSDSSSRSTSPFS. Over residues 95-112 the composition is skewed to low complexity; the sequence is SPSSSSSDSSSRSTSPFS. 3 helical membrane passes run 277 to 297, 374 to 394, and 400 to 420; these read FCASILVLSFFQLPLFADHFL, GGFFFEFLSCYHSFLALQFSF, and VIYFAPGYICLHAYLLELTIS.

It belongs to the UPF0592 family.

The protein localises to the membrane. This is UPF0592 membrane protein C7D4.03c from Schizosaccharomyces pombe (strain 972 / ATCC 24843) (Fission yeast).